Here is a 181-residue protein sequence, read N- to C-terminus: Diphosphoinositol polyphosphate phosphohydrolase NUDT4B (181 aa).

Residues R10, 18–20, and 39–41 each bind substrate; these read KKR and SSR. In terms of domain architecture, Nudix hydrolase spans 18–145; the sequence is KKRAACLCFR…VHAEYLEKLK (128 aa). Positions 50 and 66 each coordinate Mg(2+). Positions 51–72 match the Nudix box motif; sequence GGMEPEEEPGGAAVREVYEEAG. The active-site Proton acceptor is the E69. Residue E70 participates in Mg(2+) binding. Substrate is bound by residues 90-92, R116, and K134; that span reads RKH.

The protein belongs to the Nudix hydrolase family. DIPP subfamily. It depends on Mg(2+) as a cofactor. Mn(2+) is required as a cofactor.

The protein resides in the cytoplasm. It catalyses the reaction diphospho-myo-inositol polyphosphate + H2O = myo-inositol polyphosphate + phosphate.. Its function is as follows. Cleaves a beta-phosphate from the diphosphate groups in PP-InsP5 (diphosphoinositol pentakisphosphate), PP-InsP4 and [PP]2-InsP4 (bisdiphosphoinositol tetrakisphosphate), suggesting that it may play a role in signal transduction. Also able to catalyze the hydrolysis of dinucleoside oligophosphate Ap6A, but not Ap5A. The major reaction products are ADP and p4a from Ap6A. Also able to hydrolyze 5-phosphoribose 1-diphosphate. Does not play a role in U8 snoRNA decapping activity. Binds U8 snoRNA. This is Diphosphoinositol polyphosphate phosphohydrolase NUDT4B from Homo sapiens (Human).